The chain runs to 463 residues: MSTNQIILTDQGDNYVNVWSHVAQDLYNHYGETLYNSWFSKVNFIESSLNTVILCAPTNFVRDWIKSKYSMVILQLFQHYNNTIKSIEIITKELPGTTQTVTELPTKTFADIGSSELNSENIFSTLDVRFTFDNFVVGAPNELAYAAARAVAESSGAVSESNPLFLYGGVGLGKTHLMHAIGWYIKQHNPSRKVIYMSAEKFMYQFVKALRNKEVISFKEKFRSVDVLMIDDIQFICGKDSTQEEFFHTFNTLIDNNRQMVISCDRSPSDLDNIEDRIKSRLGWGLVADVHSTTYELRLGILESKIEQMNVKIPKDVIDFLASKIVSNVRELEGALNKVIAHSNFTLKEITLENTQNILRDLLRSNERIITVEDIQKKVASRYNIKLSDMSSSRRLREVARPRQIAMYLSKALTPKSLADIGKKFGKKDHTTVMHAIKKVEELLENDIELREEINLLMKILQN.

The domain I, interacts with DnaA modulators stretch occupies residues 1-83; sequence MSTNQIILTD…LQLFQHYNNT (83 aa). Positions 83 to 124 are domain II; the sequence is TIKSIEIITKELPGTTQTVTELPTKTFADIGSSELNSENIFS. The tract at residues 125-343 is domain III, AAA+ region; the sequence is TLDVRFTFDN…GALNKVIAHS (219 aa). ATP contacts are provided by G171, G173, K174, and T175. Positions 344 to 463 are domain IV, binds dsDNA; sequence NFTLKEITLE…INLLMKILQN (120 aa).

It belongs to the DnaA family. As to quaternary structure, oligomerizes as a right-handed, spiral filament on DNA at oriC.

The protein resides in the cytoplasm. In terms of biological role, plays an essential role in the initiation and regulation of chromosomal replication. ATP-DnaA binds to the origin of replication (oriC) to initiate formation of the DNA replication initiation complex once per cell cycle. Binds the DnaA box (a 9 base pair repeat at the origin) and separates the double-stranded (ds)DNA. Forms a right-handed helical filament on oriC DNA; dsDNA binds to the exterior of the filament while single-stranded (ss)DNA is stabiized in the filament's interior. The ATP-DnaA-oriC complex binds and stabilizes one strand of the AT-rich DNA unwinding element (DUE), permitting loading of DNA polymerase. After initiation quickly degrades to an ADP-DnaA complex that is not apt for DNA replication. Binds acidic phospholipids. The polypeptide is Chromosomal replication initiator protein DnaA (Rickettsia conorii (strain ATCC VR-613 / Malish 7)).